Reading from the N-terminus, the 68-residue chain is uncharacterized protein (68 aa).

The HMA domain occupies 2-67 (KTITLNIKGI…VIEDAGFDAT (66 aa)). Residues C13 and C16 each contribute to the a metal cation site.

This is an uncharacterized protein from Haemophilus influenzae (strain ATCC 51907 / DSM 11121 / KW20 / Rd).